The chain runs to 264 residues: Tritrans,polycis-undecaprenyl-diphosphate synthase (geranylgeranyl-diphosphate specific) (264 aa).

Asp43 is an active-site residue. Asp43 contributes to the Mg(2+) binding site. Substrate-binding positions include 44–47 (GNRR), Trp48, His60, and 88–90 (STE). Residue Asn91 is the Proton acceptor of the active site. Substrate contacts are provided by residues Phe92, Arg94, Arg213, and 219–221 (RIS). Glu232 serves as a coordination point for Mg(2+).

It belongs to the UPP synthase family. As to quaternary structure, homodimer. Mg(2+) is required as a cofactor.

The catalysed reaction is geranylgeranyl diphosphate + 7 isopentenyl diphosphate = tri-trans,hepta-cis-undecaprenyl diphosphate + 7 diphosphate. Catalyzes the sequential condensation of isopentenyl diphosphate (IPP) with geranylgeranyl diphosphate (GGPP) to yield (2Z,6Z,10Z,14Z,18Z,22Z,26Z,30E,34E,38E)-undecaprenyl diphosphate (tritrans,heptacis-UPP). It is probably the precursor of glycosyl carrier lipids. The sequence is that of Tritrans,polycis-undecaprenyl-diphosphate synthase (geranylgeranyl-diphosphate specific) from Pyrococcus abyssi (strain GE5 / Orsay).